Consider the following 970-residue polypeptide: Probable histidine kinase 6 (970 aa).

Over 1–12 the chain is Cytoplasmic; the sequence is MGKPEARSGWRN. The helical transmembrane segment at 13–33 threads the bilayer; it reads AAAAAWVLVAVACAAYMHWHL. Residues 34 to 306 lie on the Extracellular side of the membrane; it reads RRETMDRAEE…YRQKPPLPWS (273 aa). In terms of domain architecture, CHASE spans 82–294; it reads FPSAIDQDTF…GDPFRAHEMR (213 aa). The chain crosses the membrane as a helical span at residues 307–327; the sequence is AITNPLGTFVIWMLVGYIICA. At 328–970 the chain is on the cytoplasmic side; sequence AWSRYDKVSE…LVVGTKESAV (643 aa). Residues 362-651 enclose the Histidine kinase domain; that stretch reads TVSHEIRTPM…TFTFSAVLKR (290 aa). A Phosphohistidine; by autocatalysis modification is found at histidine 365. Response regulatory domains are found at residues 676-802 and 827-962; these read KAIL…QQLL and NILI…SRLV. Aspartate 877 is modified (4-aspartylphosphate).

In terms of processing, activation probably requires a transfer of a phosphate group between a His in the transmitter domain and an Asp of the receiver domain. In terms of tissue distribution, highly expressed in spikelets and at lower levels in roots, young leaves, mature leaves and stems.

Its subcellular location is the cell membrane. The catalysed reaction is ATP + protein L-histidine = ADP + protein N-phospho-L-histidine.. Cytokinin receptor related to bacterial two-component regulators. Functions as a histidine kinase and transmits the stress signal to a downstream MAPK cascade. The chain is Probable histidine kinase 6 from Oryza sativa subsp. japonica (Rice).